The following is an 82-amino-acid chain: Phosphoribosylformylglycinamidine synthase subunit PurS (82 aa).

Belongs to the PurS family. Homodimer. Part of the FGAM synthase complex composed of 1 PurL, 1 PurQ and 2 PurS subunits.

The protein resides in the cytoplasm. It carries out the reaction N(2)-formyl-N(1)-(5-phospho-beta-D-ribosyl)glycinamide + L-glutamine + ATP + H2O = 2-formamido-N(1)-(5-O-phospho-beta-D-ribosyl)acetamidine + L-glutamate + ADP + phosphate + H(+). Its pathway is purine metabolism; IMP biosynthesis via de novo pathway; 5-amino-1-(5-phospho-D-ribosyl)imidazole from N(2)-formyl-N(1)-(5-phospho-D-ribosyl)glycinamide: step 1/2. Part of the phosphoribosylformylglycinamidine synthase complex involved in the purines biosynthetic pathway. Catalyzes the ATP-dependent conversion of formylglycinamide ribonucleotide (FGAR) and glutamine to yield formylglycinamidine ribonucleotide (FGAM) and glutamate. The FGAM synthase complex is composed of three subunits. PurQ produces an ammonia molecule by converting glutamine to glutamate. PurL transfers the ammonia molecule to FGAR to form FGAM in an ATP-dependent manner. PurS interacts with PurQ and PurL and is thought to assist in the transfer of the ammonia molecule from PurQ to PurL. The polypeptide is Phosphoribosylformylglycinamidine synthase subunit PurS (Thermotoga maritima (strain ATCC 43589 / DSM 3109 / JCM 10099 / NBRC 100826 / MSB8)).